Reading from the N-terminus, the 393-residue chain is 4-hydroxyphenylpyruvate dioxygenase (393 aa).

VOC domains lie at 17–148 (AFDH…LLER) and 179–339 (FLDH…IFSK). Residues H182, H267, and E350 each contribute to the Fe cation site.

Belongs to the 4HPPD family. Requires Fe cation as cofactor. In terms of tissue distribution, expressed in the hypodermis and intestine.

It catalyses the reaction 3-(4-hydroxyphenyl)pyruvate + O2 = homogentisate + CO2. Its pathway is amino-acid degradation; L-phenylalanine degradation; acetoacetate and fumarate from L-phenylalanine: step 3/6. Functionally, key enzyme in the degradation of tyrosine. The sequence is that of 4-hydroxyphenylpyruvate dioxygenase from Caenorhabditis elegans.